The primary structure comprises 158 residues: Heavy metal-associated isoprenylated plant protein 23 (158 aa).

One can recognise an HMA domain in the interval 31 to 94 (FQTVELKVRM…KAKATGKKAE (64 aa)). The a metal cation site is built by cysteine 42 and cysteine 45. Cysteine 155 carries the cysteine methyl ester modification. Residue cysteine 155 is the site of S-farnesyl cysteine attachment. Residues 156–158 (SIM) constitute a propeptide, removed in mature form.

This sequence belongs to the HIPP family. As to quaternary structure, interacts with ZHD11/HB29.

Heavy-metal-binding protein. The sequence is that of Heavy metal-associated isoprenylated plant protein 23 from Arabidopsis thaliana (Mouse-ear cress).